The following is a 193-amino-acid chain: Xanthine phosphoribosyltransferase (193 aa).

The xanthine site is built by Leu20 and Asn27. Residue 128 to 132 coordinates 5-phospho-alpha-D-ribose 1-diphosphate; the sequence is ANGDA. Xanthine is bound at residue Lys156.

Belongs to the purine/pyrimidine phosphoribosyltransferase family. Xpt subfamily. As to quaternary structure, homodimer.

The protein resides in the cytoplasm. The catalysed reaction is XMP + diphosphate = xanthine + 5-phospho-alpha-D-ribose 1-diphosphate. Its pathway is purine metabolism; XMP biosynthesis via salvage pathway; XMP from xanthine: step 1/1. Its function is as follows. Converts the preformed base xanthine, a product of nucleic acid breakdown, to xanthosine 5'-monophosphate (XMP), so it can be reused for RNA or DNA synthesis. The protein is Xanthine phosphoribosyltransferase of Staphylococcus saprophyticus subsp. saprophyticus (strain ATCC 15305 / DSM 20229 / NCIMB 8711 / NCTC 7292 / S-41).